The primary structure comprises 287 residues: Formamidopyrimidine-DNA glycosylase (287 aa).

Pro2 functions as the Schiff-base intermediate with DNA in the catalytic mechanism. The Proton donor role is filled by Glu3. Catalysis depends on Lys61, which acts as the Proton donor; for beta-elimination activity. DNA-binding residues include His95, Arg115, and Arg157. The FPG-type zinc-finger motif lies at 243–277 (NVYGRADQPCRRCGTPVRREAFMNRSSYSCPRCQP). Arg267 functions as the Proton donor; for delta-elimination activity in the catalytic mechanism.

Belongs to the FPG family. Monomer. The cofactor is Zn(2+).

The enzyme catalyses Hydrolysis of DNA containing ring-opened 7-methylguanine residues, releasing 2,6-diamino-4-hydroxy-5-(N-methyl)formamidopyrimidine.. The catalysed reaction is 2'-deoxyribonucleotide-(2'-deoxyribose 5'-phosphate)-2'-deoxyribonucleotide-DNA = a 3'-end 2'-deoxyribonucleotide-(2,3-dehydro-2,3-deoxyribose 5'-phosphate)-DNA + a 5'-end 5'-phospho-2'-deoxyribonucleoside-DNA + H(+). Its function is as follows. Involved in base excision repair of DNA damaged by oxidation or by mutagenic agents. Acts as a DNA glycosylase that recognizes and removes damaged bases. Has a preference for oxidized purines, such as 7,8-dihydro-8-oxoguanine (8-oxoG). Has AP (apurinic/apyrimidinic) lyase activity and introduces nicks in the DNA strand. Cleaves the DNA backbone by beta-delta elimination to generate a single-strand break at the site of the removed base with both 3'- and 5'-phosphates. This Salinispora arenicola (strain CNS-205) protein is Formamidopyrimidine-DNA glycosylase.